The following is a 264-amino-acid chain: MDIFDAIVLGIIQGLTEFLPVSSSGHLELGKAILGDTSLPEESLLFTVVLHFATALSTLVVFRKDVFEIFSGLLKFKWNEETQFSLKIIISMLPAVIVGLLFEEQLEALFGGNILFVGFMLLITALLLWLADKAKDTGKKVSYRNAFIIGVSQAIAMLPGISRSGATISTSVLLGNDKTKAARFSFLMVVPLIFGKIAKDLMSGELMASSTDFSILATGFIAAFLAGLVACTWMISLVKKSKLSWFAIYCFVVGLAAIIFAYAQ.

The next 7 membrane-spanning stretches (helical) occupy residues 42–62 (ESLLFTVVLHFATALSTLVVF), 82–102 (TQFSLKIIISMLPAVIVGLLF), 109–129 (LFGGNILFVGFMLLITALLLW), 146–166 (AFIIGVSQAIAMLPGISRSGA), 184–204 (FSFLMVVPLIFGKIAKDLMSG), 215–235 (ILATGFIAAFLAGLVACTWMI), and 243–263 (LSWFAIYCFVVGLAAIIFAYA).

The protein belongs to the UppP family.

It localises to the cell membrane. The enzyme catalyses di-trans,octa-cis-undecaprenyl diphosphate + H2O = di-trans,octa-cis-undecaprenyl phosphate + phosphate + H(+). Functionally, catalyzes the dephosphorylation of undecaprenyl diphosphate (UPP). Confers resistance to bacitracin. This is Undecaprenyl-diphosphatase from Christiangramia forsetii (strain DSM 17595 / CGMCC 1.15422 / KT0803) (Gramella forsetii).